A 145-amino-acid polypeptide reads, in one-letter code: Protein BUD31 homolog 2 (145 aa).

It belongs to the BUD31 (G10) family.

The protein localises to the nucleus. The polypeptide is Protein BUD31 homolog 2 (Oryza sativa subsp. japonica (Rice)).